The following is a 598-amino-acid chain: NADH-quinone oxidoreductase subunit C/D (598 aa).

Residues 1–189 (MTDLTTSDSL…DPYVLTKQKE (189 aa)) are NADH dehydrogenase I subunit C. The segment at 213–598 (DFMFLNLGPN…IDFVMSDVDR (386 aa)) is NADH dehydrogenase I subunit D.

In the N-terminal section; belongs to the complex I 30 kDa subunit family. It in the C-terminal section; belongs to the complex I 49 kDa subunit family. NDH-1 is composed of 13 different subunits. Subunits NuoB, CD, E, F, and G constitute the peripheral sector of the complex.

The protein localises to the cell inner membrane. It carries out the reaction a quinone + NADH + 5 H(+)(in) = a quinol + NAD(+) + 4 H(+)(out). Functionally, NDH-1 shuttles electrons from NADH, via FMN and iron-sulfur (Fe-S) centers, to quinones in the respiratory chain. The immediate electron acceptor for the enzyme in this species is believed to be ubiquinone. Couples the redox reaction to proton translocation (for every two electrons transferred, four hydrogen ions are translocated across the cytoplasmic membrane), and thus conserves the redox energy in a proton gradient. The protein is NADH-quinone oxidoreductase subunit C/D of Yersinia pseudotuberculosis serotype O:1b (strain IP 31758).